Consider the following 1562-residue polypeptide: Cell wall protein RBR3 (1562 aa).

A signal peptide spans 1 to 20 (MIIFRKSFFTFWLLLNSVLA). The N-linked (GlcNAc...) asparagine glycan is linked to asparagine 190. Over residues 338–353 (APGTNPTEYTTTITTT) the composition is skewed to low complexity. The segment at 338–366 (APGTNPTEYTTTITTTNSAGKPLTETGVV) is disordered. The N-linked (GlcNAc...) asparagine glycan is linked to asparagine 373. 2 stretches are compositionally biased toward low complexity: residues 383-415 (FPTSSSSSSSSSTVSSTAPSSSSTKPSSSSQPS) and 422-729 (SSSK…ISAT). Disordered regions lie at residues 383-729 (FPTS…ISAT), 1404-1424 (GSGSDSGSGSGSGSGSGSSSN), and 1455-1486 (YSSGGSGNGVLPSGANNVGSNQTPTVSGGNSN). 3 N-linked (GlcNAc...) asparagine glycosylation sites follow: asparagine 602, asparagine 679, and asparagine 705. The segment covering 1407–1419 (SDSGSGSGSGSGS) has biased composition (gly residues). Over residues 1468-1486 (GANNVGSNQTPTVSGGNSN) the composition is skewed to polar residues. Asparagine 1538 is lipidated: GPI-anchor amidated asparagine. A propeptide spans 1539–1562 (SGSKFSVGKSAFIAIILTTFIGFI) (removed in mature form).

This sequence belongs to the HYR1/IFF family. In terms of processing, the GPI-anchor is attached to the protein in the endoplasmic reticulum and serves to target the protein to the cell surface. There, the glucosamine-inositol phospholipid moiety is cleaved off and the GPI-modified mannoprotein is covalently attached via its lipidless GPI glycan remnant to the 1,6-beta-glucan of the outer cell wall layer.

The protein localises to the secreted. The protein resides in the cell wall. Its subcellular location is the membrane. In terms of biological role, GPI-anchored cell wall protein involved in cell wall organization, hyphal growth, as well as in host-fungal interaction and virulence. This chain is Cell wall protein RBR3 (RBR3), found in Candida albicans (strain SC5314 / ATCC MYA-2876) (Yeast).